The chain runs to 313 residues: E3 ubiquitin-protein ligase RNF126 (313 aa).

Residue Ala2 is modified to N-acetylalanine. Ser5 is subject to Phosphoserine. The required for interaction with BAG6 stretch occupies residues 5-101 (SPQPGRYFCH…FEIPTFPPGA (97 aa)). Zn(2+) is bound by residues Cys13, Cys16, Cys29, and Cys32. A C4-type zinc finger spans residues 13-32 (CHCCSVEIVPRLPDYICPRC). 2 disordered regions span residues 42–64 (EETR…SRQQ) and 96–128 (TFPP…ARQP). The span at 47–64 (AENGSAPSTASADQSRQQ) shows a compositional bias: polar residues. The segment covering 104–117 (DDSRDPESRREREQ) has biased composition (basic and acidic residues). Basic residues predominate over residues 118–128 (HSRHRYGARQP). Residues 203-306 (TGPPPADKEK…SSSSSSSPGN (104 aa)) are sufficient for interaction with AICDA. The RING-type zinc finger occupies 232 to 273 (CPVCKDDYGLGEHVRQLPCNHLFHDGCIVPWLEQHDSCPVCR). The interval 280-313 (NTATDPPGLAGVSFSSSSSSSSSSPGNENPASSS) is disordered. Residues 292-313 (SFSSSSSSSSSSPGNENPASSS) show a composition bias toward low complexity.

In terms of assembly, interacts with CCDC50, EGFR, FLT3 and SCAMP3. Interacts with BAG6 (via ubiquitin-like domain); required for BAG6-dependent ubiquitination of proteins mislocalized to the cytosol. Interacts with CDKN1A. Interacts with AICDA. In terms of processing, ubiquitinated. May undergo autoubiquitination.

The protein resides in the cytoplasm. It is found in the nucleus. It carries out the reaction S-ubiquitinyl-[E2 ubiquitin-conjugating enzyme]-L-cysteine + [acceptor protein]-L-lysine = [E2 ubiquitin-conjugating enzyme]-L-cysteine + N(6)-ubiquitinyl-[acceptor protein]-L-lysine.. Its pathway is protein modification; protein ubiquitination. E3 ubiquitin-protein ligase that mediates ubiquitination oF target proteins. Depending on the associated E2 ligase, mediates 'Lys-27'-, 'Lys-29'-, 'Lys-48'- and/or 'Lys-63'-linked polyubiquitination of substrates. Part of a BAG6-dependent quality control process ensuring that proteins of the secretory pathway that are mislocalized to the cytosol are degraded by the proteasome. Probably acts by providing the ubiquitin ligase activity associated with the BAG6 complex and be responsible for ubiquitination of the hydrophobic mislocalized proteins and their targeting to the proteasome. May also play a role in the endosomal recycling of IGF2R, the cation-independent mannose-6-phosphate receptor. May play a role in the endosomal sorting and degradation of several membrane receptors including EGFR, FLT3, MET and CXCR4, by mediating their ubiquitination. By ubiquitinating CDKN1A/p21 and targeting it for degradation, may also promote cell proliferation. May monoubiquitinate AICDA. Acts as a regulator of DNA repair by mediating 'Lys-27'- and 'Lys-29'-linked polyubiquitination of MRE11, thereby promoting the exonuclease activity of MRE11. This is E3 ubiquitin-protein ligase RNF126 from Bos taurus (Bovine).